The chain runs to 313 residues: Ribosomal RNA small subunit methyltransferase H (313 aa).

S-adenosyl-L-methionine is bound by residues 35 to 37 (GGH), Asp-55, Phe-80, Asp-102, and Gln-109.

It belongs to the methyltransferase superfamily. RsmH family.

The protein resides in the cytoplasm. It carries out the reaction cytidine(1402) in 16S rRNA + S-adenosyl-L-methionine = N(4)-methylcytidine(1402) in 16S rRNA + S-adenosyl-L-homocysteine + H(+). Its function is as follows. Specifically methylates the N4 position of cytidine in position 1402 (C1402) of 16S rRNA. The protein is Ribosomal RNA small subunit methyltransferase H of Shewanella woodyi (strain ATCC 51908 / MS32).